The primary structure comprises 326 residues: GTP 3',8-cyclase (326 aa).

Residues 7–240 (AFARKFYYLR…AQVFHHSDYQ (234 aa)) enclose the Radical SAM core domain. Arginine 16 lines the GTP pocket. Positions 23 and 27 each coordinate [4Fe-4S] cluster. Tyrosine 29 serves as a coordination point for S-adenosyl-L-methionine. Cysteine 30 is a binding site for [4Fe-4S] cluster. Position 65 (arginine 65) interacts with GTP. Residue glycine 69 coordinates S-adenosyl-L-methionine. Threonine 96 contacts GTP. An S-adenosyl-L-methionine-binding site is contributed by serine 120. Lysine 157 contributes to the GTP binding site. Methionine 191 lines the S-adenosyl-L-methionine pocket. The [4Fe-4S] cluster site is built by cysteine 254 and cysteine 257. Residue 259 to 261 (RLR) coordinates GTP. [4Fe-4S] cluster is bound at residue cysteine 271.

The protein belongs to the radical SAM superfamily. MoaA family. Monomer and homodimer. [4Fe-4S] cluster is required as a cofactor.

The catalysed reaction is GTP + AH2 + S-adenosyl-L-methionine = (8S)-3',8-cyclo-7,8-dihydroguanosine 5'-triphosphate + 5'-deoxyadenosine + L-methionine + A + H(+). Its pathway is cofactor biosynthesis; molybdopterin biosynthesis. Its function is as follows. Catalyzes the cyclization of GTP to (8S)-3',8-cyclo-7,8-dihydroguanosine 5'-triphosphate. The chain is GTP 3',8-cyclase from Yersinia pestis.